Here is a 380-residue protein sequence, read N- to C-terminus: Flap endonuclease 1 (380 aa).

The segment at 1–104 (MGIQGLAKLI…GELAKRSERR (104 aa)) is N-domain. At arginine 19 the chain carries Symmetric dimethylarginine; by PRMT5. Aspartate 34 provides a ligand contact to Mg(2+). Arginine 47 and arginine 70 together coordinate DNA. The residue at position 80 (lysine 80) is an N6-acetyllysine. Aspartate 86 contributes to the Mg(2+) binding site. A symmetric dimethylarginine; by PRMT5 mark is found at arginine 100 and arginine 104. An I-domain region spans residues 122–253 (EVEKFTKRLV…KRAVDLIQKH (132 aa)). Residues glutamate 158, glutamate 160, aspartate 179, and aspartate 181 each contribute to the Mg(2+) site. Glutamate 158 lines the DNA pocket. The residue at position 187 (serine 187) is a Phosphoserine; by CDK2. Symmetric dimethylarginine; by PRMT5 is present on arginine 192. Serine 197 carries the post-translational modification Phosphoserine. DNA contacts are provided by glycine 231 and aspartate 233. Aspartate 233 serves as a coordination point for Mg(2+). A phosphoserine mark is found at serine 255, serine 293, and serine 335. Residues 327–380 (RLSKSRQGSTQGRLDDFFKVTGSLSSAKRKEPEPKGAAKKKAKTGAAGKFKRGK) are disordered. Threonine 336 carries the post-translational modification Phosphothreonine. Positions 336 to 344 (TQGRLDDFF) are interaction with PCNA. Residues lysine 354, lysine 375, lysine 377, and lysine 380 each carry the N6-acetyllysine modification. The span at 363-380 (AAKKKAKTGAAGKFKRGK) shows a compositional bias: basic residues.

It belongs to the XPG/RAD2 endonuclease family. FEN1 subfamily. As to quaternary structure, interacts with PCNA. Three molecules of FEN1 bind to one PCNA trimer with each molecule binding to one PCNA monomer. PCNA stimulates the nuclease activity without altering cleavage specificity. The C-terminal domain binds EP300; can bind simultaneously to both PCNA and EP300. Interacts with DDX11; this interaction is direct and increases flap endonuclease activity of FEN1. Interacts with WDR4; regulating its endonuclease activity. Interacts with POLB. Mg(2+) serves as cofactor. In terms of processing, acetylated by EP300. Acetylation inhibits both endonuclease and exonuclease activity. Acetylation also reduces DNA-binding activity but does not affect interaction with PCNA or EP300. Post-translationally, phosphorylation upon DNA damage induces relocalization to the nuclear plasma. Phosphorylation at Ser-187 by CDK2 occurs during late S-phase and results in dissociation from PCNA. Methylation at Arg-192 by PRMT5 impedes Ser-187 phosphorylation and increases interaction with PCNA.

It is found in the nucleus. The protein resides in the nucleolus. Its subcellular location is the nucleoplasm. It localises to the mitochondrion. In terms of biological role, structure-specific nuclease with 5'-flap endonuclease and 5'-3' exonuclease activities involved in DNA replication and repair. During DNA replication, cleaves the 5'-overhanging flap structure that is generated by displacement synthesis when DNA polymerase encounters the 5'-end of a downstream Okazaki fragment. It enters the flap from the 5'-end and then tracks to cleave the flap base, leaving a nick for ligation. Also involved in the long patch base excision repair (LP-BER) pathway, by cleaving within the apurinic/apyrimidinic (AP) site-terminated flap. Acts as a genome stabilization factor that prevents flaps from equilibrating into structures that lead to duplications and deletions. Also possesses 5'-3' exonuclease activity on nicked or gapped double-stranded DNA, and exhibits RNase H activity. Also involved in replication and repair of rDNA and in repairing mitochondrial DNA. This Bos taurus (Bovine) protein is Flap endonuclease 1.